The sequence spans 140 residues: Pro-variola growth factor (140 aa).

The N-terminal stretch at 1–18 is a signal peptide; that stretch reads MSMKYLMLLFAAMIIRSF. At 19-100 the chain is on the extracellular side; sequence ANSGNAIETT…SEKPNTTTSY (82 aa). N-linked (GlcNAc...) asparagine; by host glycosylation is present at N34. The 41-residue stretch at 41-81 folds into the EGF-like domain; sequence AIRLCGPEGNGYCFHGICIHARDIDGMYCRCSHGYTGIRCQ. Disulfide bonds link C45–C58, C53–C69, and C71–C80. N-linked (GlcNAc...) asparagine; by host glycosylation occurs at N95. A helical transmembrane segment spans residues 101 to 121; that stretch reads IPSPGIVLVLLVSIIMCCLLF. The Cytoplasmic portion of the chain corresponds to 122–140; it reads VYRFTRRTNKLPLQDMVVP.

It belongs to the orthopoxvirus OPG019 family. Variola growth factor interacts with host EGFR and promotes EGFR dimerization.

The protein localises to the host membrane. The protein resides in the secreted. Functionally, stimulates cellular proliferation (hyperplasia)and mobility around infected cells to promote rapid and efficient spread of infection. This effect is beneficial for virus replication in vivo, because poxviruses replicate possibly better in proliferating cells than in quiescent cells. Acts by binding host EGFR, inducing its dimerization, autophosphorylation and leading to activation of several cellular pathways regulating cell proliferation or cell survival. The activation by host EGFR of mitogen activated protein kinases (MAPK) and extracellular-signal regulated kinases (ERK) are essential for the positive effect of vaccinia growth factor on poxvirus virulence in vivo. This is Pro-variola growth factor (OPG019) from Variola virus.